A 484-amino-acid chain; its full sequence is Cysteine--tRNA ligase (484 aa).

Cysteine 29 provides a ligand contact to Zn(2+). The short motif at 31–41 is the 'HIGH' region element; the sequence is ITVYDYCHLGH. Residues cysteine 215, histidine 240, and glutamate 244 each contribute to the Zn(2+) site. The 'KMSKS' region signature appears at 272 to 276; sequence KMSKS. ATP is bound at residue lysine 275.

The protein belongs to the class-I aminoacyl-tRNA synthetase family. In terms of assembly, monomer. Requires Zn(2+) as cofactor.

Its subcellular location is the cytoplasm. The catalysed reaction is tRNA(Cys) + L-cysteine + ATP = L-cysteinyl-tRNA(Cys) + AMP + diphosphate. This is Cysteine--tRNA ligase from Rippkaea orientalis (strain PCC 8801 / RF-1) (Cyanothece sp. (strain PCC 8801)).